Here is a 410-residue protein sequence, read N- to C-terminus: Elongation factor Tu, chloroplastic (410 aa).

The tr-type G domain occupies 10–213 (KPHLNIGTIG…TVDEYIPTPK (204 aa)). Residues 19-26 (GHVDHGKT) form a G1 region. 19–26 (GHVDHGKT) serves as a coordination point for GTP. Residue Thr-26 participates in Mg(2+) binding. A G2 region spans residues 60–64 (GITIN). The G3 stretch occupies residues 81-84 (DCPG). Residues 81–85 (DCPGH) and 136–139 (NKAD) each bind GTP. The interval 136 to 139 (NKAD) is G4. Residues 174 to 176 (SAI) are G5.

It belongs to the TRAFAC class translation factor GTPase superfamily. Classic translation factor GTPase family. EF-Tu/EF-1A subfamily.

Its subcellular location is the plastid. It is found in the chloroplast. The catalysed reaction is GTP + H2O = GDP + phosphate + H(+). In terms of biological role, GTP hydrolase that promotes the GTP-dependent binding of aminoacyl-tRNA to the A-site of ribosomes during protein biosynthesis. In Codium fragile (Dead man's fingers), this protein is Elongation factor Tu, chloroplastic (tufA).